The primary structure comprises 1293 residues: Period circadian protein homolog 1 (1293 aa).

A disordered region spans residues 1 to 134 (MSGPLEGADG…SSEQSARART (134 aa)). Residues 1-151 (MSGPLEGADG…LRELKLRLPP (151 aa)) form an interaction with BTRC region. Low complexity-rich tracts occupy residues 48–57 (NSNGSSGNES) and 64–115 (GASQ…ASSE). A compositionally biased stretch (polar residues) spans 116–132 (QDNPSTSGCSSEQSARA). Residue threonine 121 is modified to Phosphothreonine; by CSNK1E. Serine 122 and serine 126 each carry phosphoserine; by CSNK1E. A Nuclear export signal 1 motif is present at residues 138–147 (LMTALRELKL). PAS domains lie at 208 to 275 (ITSE…PSRL) and 348 to 414 (YEAP…KILQ). The region spanning 422–465 (HSPIRFCARNGEYVTMDTSWAGFVHPWSRKVAFVLGRHKVRTAP) is the PAC domain. A Nuclear export signal 2 motif is present at residues 489–498 (LSEQIHRLLL). Disordered stretches follow at residues 509–544 (LCGV…PAPV) and 647–697 (TKRK…KEPV). Low complexity-rich tracts occupy residues 513-533 (GPLM…SNGG) and 652-661 (ASSSCTASSA). A required for phosphorylation by CSNK1E region spans residues 596-814 (ELEVAPAPDQ…GLDTSSVAPS (219 aa)). A phosphoserine mark is found at serine 660, serine 662, and serine 703. Disordered regions lie at residues 748–771 (GLAP…APDA), 808–870 (TSSV…PPAT), 935–1094 (SQAP…SKYF), and 1204–1293 (SVQD…NGTS). Positions 750-768 (APGPAPSPAPSPTVAPDPA) are enriched in pro residues. Phosphoserine is present on serine 814. The Nuclear localization signal motif lies at 823–839 (IPSGRRHHCRSKAKRSR). Over residues 826 to 843 (GRRHHCRSKAKRSRHHQT) the composition is skewed to basic residues. Composition is skewed to pro residues over residues 856 to 870 (SPVP…PPAT) and 952 to 962 (PSLPPPPPSPP). Residues 969–982 (LFNSRCSSPLQLNL) show a composition bias toward polar residues. Phosphoserine is present on residues serine 975 and serine 976. The short motif at 978-985 (LQLNLLQL) is the Nuclear export signal 3 element. Over residues 1032 to 1058 (LSGSSDLLELLLQEDSRSGTGSAASGS) the composition is skewed to low complexity. An LXXLL motif is present at residues 1039–1043 (LELLL). Positions 1059–1073 (LGSGLGSGSGSGSHE) are enriched in gly residues. The segment covering 1074–1091 (GGSTSASITRSSQSSHTS) has biased composition (low complexity). Residues 1145–1293 (SRDAASVLKQ…ALPAEENGTS (149 aa)) form a CRY binding domain region. Gly residues predominate over residues 1232 to 1250 (GEGGGVGGGGGGVGGGGGD). Polar residues predominate over residues 1255-1269 (AQTQIGTKGSSSQDS).

As to quaternary structure, homodimer. Component of the circadian core oscillator, which includes the CRY proteins, CLOCK or NPAS2, BMAL1 or BMAL2, CSNK1D and/or CSNK1E, TIMELESS, and the PER proteins. Interacts directly with TIMELESS, PER2, PER3, CRY1 and CRY2. Interacts with BMAL1 and CLOCK. Interacts with GPRASP1. Interacts (phosphorylated) with BTRC and FBXW11; the interactions trigger proteasomal degradation. Interacts with NONO and WDR5. Interacts with SFPQ. Interacts with USP2. Interacts with HNF4A. Phosphorylated on serine residues by CSNK1D, CSNK1E and probably also by CSNK1G2. Phosphorylation by CSNK1D or CSNK1E promotes nuclear location of PER proteins as well as ubiquitination and subsequent degradation. May be dephosphorylated by PP1. Post-translationally, ubiquitinated; requires phosphorylation by CSNK1E and interaction with BTRC and FBXW11. Deubiquitinated by USP2. In terms of tissue distribution, expressed in pancreas. In the CNS, highly expressed in the SCN, internal granular layer of granular cells of the olfactory bulb, tuberculum olfactorium, piriform cortex, gyrus dentatus of the hippocampus, cerebellum, pars tuberalis/median eminence, and pituitary, and moderately in the tenia tecta, caudate putamen, accumbens nucleus, spinal cord, superior and inferior colliculus and pineal gland.

It localises to the nucleus. Its subcellular location is the cytoplasm. Transcriptional repressor which forms a core component of the circadian clock. The circadian clock, an internal time-keeping system, regulates various physiological processes through the generation of approximately 24 hour circadian rhythms in gene expression, which are translated into rhythms in metabolism and behavior. It is derived from the Latin roots 'circa' (about) and 'diem' (day) and acts as an important regulator of a wide array of physiological functions including metabolism, sleep, body temperature, blood pressure, endocrine, immune, cardiovascular, and renal function. Consists of two major components: the central clock, residing in the suprachiasmatic nucleus (SCN) of the brain, and the peripheral clocks that are present in nearly every tissue and organ system. Both the central and peripheral clocks can be reset by environmental cues, also known as Zeitgebers (German for 'timegivers'). The predominant Zeitgeber for the central clock is light, which is sensed by retina and signals directly to the SCN. The central clock entrains the peripheral clocks through neuronal and hormonal signals, body temperature and feeding-related cues, aligning all clocks with the external light/dark cycle. Circadian rhythms allow an organism to achieve temporal homeostasis with its environment at the molecular level by regulating gene expression to create a peak of protein expression once every 24 hours to control when a particular physiological process is most active with respect to the solar day. Transcription and translation of core clock components (CLOCK, NPAS2, BMAL1, BMAL2, PER1, PER2, PER3, CRY1 and CRY2) plays a critical role in rhythm generation, whereas delays imposed by post-translational modifications (PTMs) are important for determining the period (tau) of the rhythms (tau refers to the period of a rhythm and is the length, in time, of one complete cycle). A diurnal rhythm is synchronized with the day/night cycle, while the ultradian and infradian rhythms have a period shorter and longer than 24 hours, respectively. Disruptions in the circadian rhythms contribute to the pathology of cardiovascular diseases, cancer, metabolic syndromes and aging. A transcription/translation feedback loop (TTFL) forms the core of the molecular circadian clock mechanism. Transcription factors, CLOCK or NPAS2 and BMAL1 or BMAL2, form the positive limb of the feedback loop, act in the form of a heterodimer and activate the transcription of core clock genes and clock-controlled genes (involved in key metabolic processes), harboring E-box elements (5'-CACGTG-3') within their promoters. The core clock genes: PER1/2/3 and CRY1/2 which are transcriptional repressors form the negative limb of the feedback loop and interact with the CLOCK|NPAS2-BMAL1|BMAL2 heterodimer inhibiting its activity and thereby negatively regulating their own expression. This heterodimer also activates nuclear receptors NR1D1/2 and RORA/B/G, which form a second feedback loop and which activate and repress BMAL1 transcription, respectively. Regulates circadian target genes expression at post-transcriptional levels, but may not be required for the repression at transcriptional level. Controls PER2 protein decay. Represses CRY2 preventing its repression on CLOCK/BMAL1 target genes such as FXYD5 and SCNN1A in kidney and PPARA in liver. Besides its involvement in the maintenance of the circadian clock, has an important function in the regulation of several processes. Participates in the repression of glucocorticoid receptor NR3C1/GR-induced transcriptional activity by reducing the association of NR3C1/GR to glucocorticoid response elements (GREs) by BMAL1:CLOCK. Plays a role in the modulation of the neuroinflammatory state via the regulation of inflammatory mediators release, such as CCL2 and IL6. In spinal astrocytes, negatively regulates the MAPK14/p38 and MAPK8/JNK MAPK cascades as well as the subsequent activation of NFkappaB. Coordinately regulates the expression of multiple genes that are involved in the regulation of renal sodium reabsorption. Can act as gene expression activator in a gene and tissue specific manner, in kidney enhances WNK1 and SLC12A3 expression in collaboration with CLOCK. Modulates hair follicle cycling. Represses the CLOCK-BMAL1 induced transcription of BHLHE40/DEC1. The chain is Period circadian protein homolog 1 from Rattus norvegicus (Rat).